The primary structure comprises 347 residues: Haptoglobin (347 aa).

An N-terminal signal peptide occupies residues 1-18 (MRALGAVVTLLLWGQLFA). Positions 31 to 88 (DSCPKPPEIANGYVEHLVRYRCRQFYRLRTEGDGVYTLNDEKQWVNTAAGEKLPECEA) constitute a Sushi domain. Disulfide bonds link Cys-52-Cys-86, Cys-90-Cys-207, Cys-250-Cys-281, and Cys-292-Cys-322. The region spanning 103 to 345 (IIGGSMDAKG…LKDWVQETMA (243 aa)) is the Peptidase S1 domain. N-linked (GlcNAc...) asparagine glycosylation is found at Asn-148, Asn-182, Asn-256, and Asn-264. The interaction with CD163 stretch occupies residues 259 to 264 (VPEKKN).

Belongs to the peptidase S1 family. Tetramer of two alpha and two beta chains; disulfide-linked. The hemoglobin/haptoglobin complex is composed of a haptoglobin dimer bound to two hemoglobin alpha-beta dimers. Interacts with CD163. Interacts with ERGIC3. In terms of tissue distribution, expressed by the liver and secreted in plasma.

It localises to the secreted. In terms of biological role, as a result of hemolysis, hemoglobin is found to accumulate in the kidney and is secreted in the urine. Haptoglobin captures, and combines with free plasma hemoglobin to allow hepatic recycling of heme iron and to prevent kidney damage. Haptoglobin also acts as an antioxidant, has antibacterial activity and plays a role in modulating many aspects of the acute phase response. Hemoglobin/haptoglobin complexes are rapidly cleared by the macrophage CD163 scavenger receptor expressed on the surface of liver Kupfer cells through an endocytic lysosomal degradation pathway. The sequence is that of Haptoglobin (Hp) from Mus saxicola (Brown spiny mouse).